A 322-amino-acid polypeptide reads, in one-letter code: Protein mono-ADP-ribosyltransferase PARP16 (322 aa).

Topologically, residues 1-287 are cytoplasmic; the sequence is MQLSNRAAAR…RASSQLSWLS (287 aa). The PARP alpha-helical domain occupies 5–91; it reads NRAAAREAAS…AWDLVSWILS (87 aa). In terms of domain architecture, PARP catalytic spans 94–279; that stretch reads ILTIHSAKKA…VYSQKQPKRA (186 aa). Residues histidine 152, tyrosine 182, and tyrosine 254 each coordinate NAD(+). Residues 288-308 traverse the membrane as a helical segment; sequence SHWFVIMMSLYLLLLLIVSVT. Residues 309–322 lie on the Lumenal side of the membrane; it reads NSSVFHHFWNRVKR.

It belongs to the ARTD/PARP family. As to quaternary structure, interacts with KPNB1. Auto-mono-ADP-ribosylated.

The protein resides in the endoplasmic reticulum membrane. It carries out the reaction L-aspartyl-[protein] + NAD(+) = 4-O-(ADP-D-ribosyl)-L-aspartyl-[protein] + nicotinamide. The catalysed reaction is L-lysyl-[protein] + NAD(+) = N(6)-(ADP-D-ribosyl)-L-lysyl-[protein] + nicotinamide + H(+). The enzyme catalyses L-glutamyl-[protein] + NAD(+) = 5-O-(ADP-D-ribosyl)-L-glutamyl-[protein] + nicotinamide. Its activity is regulated as follows. In absence of activation signal, PARP16 is autoinhibited by the PARP alpha-helical domain (also named HD region), which prevents effective NAD(+)-binding. Activity is highly stimulated by signals, which unfold the PARP alpha-helical domain, relieving autoinhibition. Intracellular mono-ADP-ribosyltransferase that plays a role in different processes, such as protein translation and unfolded protein response (UPR), through the mono-ADP-ribosylation of proteins involved in those processes. Acts as an inhibitor of protein translation by catalyzing mono-ADP-ribosylation of ribosomal subunits, such as RPL14 and RPS6, thereby inhibiting polysome assembly and mRNA loading. Mono-ADP-ribosylation of ribosomal subunits is promoted by NMNAT2. Involved in the unfolded protein response (UPR) by ADP-ribosylating and activating EIF2AK3 and ERN1, two important UPR effectors. May also mediate mono-ADP-ribosylation of karyopherin KPNB1 a nuclear import factor. May not modify proteins on arginine or cysteine residues compared to other mono-ADP-ribosyltransferases. This chain is Protein mono-ADP-ribosyltransferase PARP16, found in Mus musculus (Mouse).